The following is a 151-amino-acid chain: Large ribosomal subunit protein bL9 (151 aa).

This sequence belongs to the bacterial ribosomal protein bL9 family.

Functionally, binds to the 23S rRNA. The chain is Large ribosomal subunit protein bL9 from Lactobacillus helveticus (strain DPC 4571).